The sequence spans 262 residues: Shikimate dehydrogenase (NADP(+)) (262 aa).

Residues 14–16 (SAS) and Thr60 contribute to the shikimate site. Lys64 (proton acceptor) is an active-site residue. Shikimate-binding residues include Asn85 and Asp100. NADP(+) is bound by residues 121–125 (GAGGA), 145–150 (NRTAER), and Phe203. Tyr205 serves as a coordination point for shikimate. Gly227 is an NADP(+) binding site.

Belongs to the shikimate dehydrogenase family. Homodimer.

The enzyme catalyses shikimate + NADP(+) = 3-dehydroshikimate + NADPH + H(+). Its pathway is metabolic intermediate biosynthesis; chorismate biosynthesis; chorismate from D-erythrose 4-phosphate and phosphoenolpyruvate: step 4/7. Functionally, involved in the biosynthesis of the chorismate, which leads to the biosynthesis of aromatic amino acids. Catalyzes the reversible NADPH linked reduction of 3-dehydroshikimate (DHSA) to yield shikimate (SA). The polypeptide is Shikimate dehydrogenase (NADP(+)) (Pyrobaculum aerophilum (strain ATCC 51768 / DSM 7523 / JCM 9630 / CIP 104966 / NBRC 100827 / IM2)).